Consider the following 855-residue polypeptide: Zinc finger protein 814 (855 aa).

The KRAB domain occupies 15 to 91 (VTFEDVAVNF…PMAGVSPKKA (77 aa)). The C2H2-type 1; degenerate zinc-finger motif lies at 120–142 (HRCEAWGNKLYDSGNFHQHQNEH). C2H2-type zinc fingers lie at residues 242–264 (YVCC…QRVH), 269–291 (HECG…QRVH), 296–318 (HECG…QRVH), 324–346 (YECG…QRVH), 352–374 (YECG…QRVH), 380–402 (YECG…QRVH), 408–430 (YECG…QRFH), 436–458 (YGCE…QRVH), 464–486 (FKCG…QRVH), 492–514 (YQCG…QRVH), 520–542 (YECG…QQIH), 548–570 (YECG…QRVH), 576–598 (YGCG…QRVH), 604–626 (YECG…QRMH), 632–654 (YKCG…QRVH), 660–682 (FKCG…QHGH), 688–710 (YVCR…QRIH), 716–738 (YACE…QRVH), 744–766 (YECN…KRIH), 772–794 (YECS…KRVH), 800–822 (YECS…KRVH), and 828–850 (YKCE…QSSH). Lys-335 participates in a covalent cross-link: Glycyl lysine isopeptide (Lys-Gly) (interchain with G-Cter in SUMO2). Residue Lys-391 forms a Glycyl lysine isopeptide (Lys-Gly) (interchain with G-Cter in SUMO2) linkage.

The polypeptide is Zinc finger protein 814 (ZNF814) (Homo sapiens (Human)).